A 528-amino-acid polypeptide reads, in one-letter code: Phosphoenolpyruvate carboxykinase (ATP) (528 aa).

Substrate contacts are provided by R56, Y192, and K198. ATP-binding positions include K198, H217, and 233–241 (GLSGTGKTT). 2 residues coordinate Mn(2+): K198 and H217. D254 is a binding site for Mn(2+). The ATP site is built by E282, R319, and T444. R319 contributes to the substrate binding site.

The protein belongs to the phosphoenolpyruvate carboxykinase (ATP) family. It depends on Mn(2+) as a cofactor.

Its subcellular location is the cytoplasm. The enzyme catalyses oxaloacetate + ATP = phosphoenolpyruvate + ADP + CO2. It participates in carbohydrate biosynthesis; gluconeogenesis. Functionally, involved in the gluconeogenesis. Catalyzes the conversion of oxaloacetate (OAA) to phosphoenolpyruvate (PEP) through direct phosphoryl transfer between the nucleoside triphosphate and OAA. In Geobacillus thermodenitrificans (strain NG80-2), this protein is Phosphoenolpyruvate carboxykinase (ATP).